Reading from the N-terminus, the 90-residue chain is Progonadoliberin-1 (90 aa).

Residues 1-21 (MILKLMAGILLLTVCLEGCSS) form the signal peptide. Glutamine 22 carries the post-translational modification Pyrrolidone carboxylic acid. At glycine 31 the chain carries Glycine amide.

The protein belongs to the GnRH family. In terms of processing, the precursor is cleaved by ACE, which removes the Gly-Lys-Arg peptide at the C-terminus, leading to mature hormone. The mature form of Gonadoliberin-1 is also cleaved and degraded by ACE.

Its subcellular location is the secreted. Its function is as follows. Stimulates the secretion of gonadotropins; it stimulates the secretion of both luteinizing and follicle-stimulating hormones. This Mus musculus (Mouse) protein is Progonadoliberin-1 (Gnrh1).